The following is a 236-amino-acid chain: Biosynthetic peptidoglycan transglycosylase (236 aa).

The chain crosses the membrane as a helical span at residues 12–31 (ALFWFAAGSIVLVLVFRWVP).

The protein belongs to the glycosyltransferase 51 family.

It is found in the cell inner membrane. It carries out the reaction [GlcNAc-(1-&gt;4)-Mur2Ac(oyl-L-Ala-gamma-D-Glu-L-Lys-D-Ala-D-Ala)](n)-di-trans,octa-cis-undecaprenyl diphosphate + beta-D-GlcNAc-(1-&gt;4)-Mur2Ac(oyl-L-Ala-gamma-D-Glu-L-Lys-D-Ala-D-Ala)-di-trans,octa-cis-undecaprenyl diphosphate = [GlcNAc-(1-&gt;4)-Mur2Ac(oyl-L-Ala-gamma-D-Glu-L-Lys-D-Ala-D-Ala)](n+1)-di-trans,octa-cis-undecaprenyl diphosphate + di-trans,octa-cis-undecaprenyl diphosphate + H(+). It functions in the pathway cell wall biogenesis; peptidoglycan biosynthesis. In terms of biological role, peptidoglycan polymerase that catalyzes glycan chain elongation from lipid-linked precursors. This is Biosynthetic peptidoglycan transglycosylase from Pseudomonas putida (strain W619).